The primary structure comprises 286 residues: Polyamine aminopropyltransferase (286 aa).

The 234-residue stretch at 5–238 folds into the PABS domain; the sequence is KTWHEKLYCH…GVMVFAWGTN (234 aa). Residues His-64 and Asp-88 each coordinate spermidine. S-methyl-5'-thioadenosine contacts are provided by residues Glu-108 and 140–141; that span reads DG. Catalysis depends on Asp-158, which acts as the Proton acceptor. 158-161 is a binding site for spermidine; the sequence is DSTD.

The protein belongs to the spermidine/spermine synthase family. In terms of assembly, homodimer or homotetramer.

The protein resides in the cytoplasm. The catalysed reaction is S-adenosyl 3-(methylsulfanyl)propylamine + putrescine = S-methyl-5'-thioadenosine + spermidine + H(+). Its pathway is amine and polyamine biosynthesis; spermidine biosynthesis; spermidine from putrescine: step 1/1. In terms of biological role, catalyzes the irreversible transfer of a propylamine group from the amino donor S-adenosylmethioninamine (decarboxy-AdoMet) to putrescine (1,4-diaminobutane) to yield spermidine. This chain is Polyamine aminopropyltransferase, found in Buchnera aphidicola subsp. Acyrthosiphon pisum (strain 5A).